Here is a 358-residue protein sequence, read N- to C-terminus: Methionine aminopeptidase 2 (358 aa).

Histidine 111 contributes to the substrate binding site. 3 residues coordinate a divalent metal cation: aspartate 131, aspartate 142, and histidine 211. Position 219 (histidine 219) interacts with substrate. Residues glutamate 244 and glutamate 339 each coordinate a divalent metal cation.

It belongs to the peptidase M24A family. Methionine aminopeptidase eukaryotic type 2 subfamily. The cofactor is Co(2+). It depends on Zn(2+) as a cofactor. Mn(2+) is required as a cofactor. Requires Fe(2+) as cofactor.

It is found in the cytoplasm. It catalyses the reaction Release of N-terminal amino acids, preferentially methionine, from peptides and arylamides.. In terms of biological role, cotranslationally removes the N-terminal methionine from nascent proteins. The N-terminal methionine is often cleaved when the second residue in the primary sequence is small and uncharged (Met-Ala-, Cys, Gly, Pro, Ser, Thr, or Val). This Laccaria bicolor (strain S238N-H82 / ATCC MYA-4686) (Bicoloured deceiver) protein is Methionine aminopeptidase 2.